The following is a 361-amino-acid chain: Peptide chain release factor 1 (361 aa).

An N5-methylglutamine modification is found at glutamine 235. A disordered region spans residues 286–305 (IDSARSAERKQKVGSGDRSE).

This sequence belongs to the prokaryotic/mitochondrial release factor family. Methylated by PrmC. Methylation increases the termination efficiency of RF1.

It is found in the cytoplasm. In terms of biological role, peptide chain release factor 1 directs the termination of translation in response to the peptide chain termination codons UAG and UAA. The polypeptide is Peptide chain release factor 1 (Rhodopseudomonas palustris (strain HaA2)).